Consider the following 68-residue polypeptide: Small integral membrane protein 10-like protein 1 (68 aa).

The disordered stretch occupies residues 1-21 (MAPAAAPSSLAVRASSPAATP).

The sequence is that of Small integral membrane protein 10-like protein 1 from Homo sapiens (Human).